A 226-amino-acid chain; its full sequence is Probable amino-acid ABC transporter permease protein YckA (226 aa).

The 189-residue stretch at 27-215 (IGYTLLISFV…AICSIAAVFQ (189 aa)) folds into the ABC transmembrane type-1 domain. The next 5 helical transmembrane spans lie at 31–51 (LLIS…ISLA), 73–93 (VPIL…GIEF), 94–114 (SAVT…IAEI), 160–180 (VLLD…PELL), and 194–214 (MTMY…AAVF).

The protein belongs to the binding-protein-dependent transport system permease family. HisMQ subfamily.

It localises to the cell membrane. In terms of biological role, part of a binding-protein-dependent transport system. Probably responsible for the translocation of the substrate across the membrane. This chain is Probable amino-acid ABC transporter permease protein YckA (yckA), found in Bacillus subtilis (strain 168).